The sequence spans 480 residues: Plant UBX domain-containing protein 10 (480 aa).

Disordered stretches follow at residues 47 to 78 (DASSSAVDGGGNNRDHDHNNATVTPDYPPRGI) and 335 to 383 (ADQA…AARV). Residues 330–389 (RAALEADQAREQQRQEEKERLEREAAEAERKLKEEEEARERAAREAEERQAARVRMRQEK) are a coiled coil. Residues 336–383 (DQAREQQRQEEKERLEREAAEAERKLKEEEEARERAAREAEERQAARV) are compositionally biased toward basic and acidic residues. Residues 399–477 (KGPDVTQVLV…GLHPQASLFI (79 aa)) enclose the UBX domain.

In Arabidopsis thaliana (Mouse-ear cress), this protein is Plant UBX domain-containing protein 10.